The sequence spans 231 residues: ATP phosphoribosyltransferase (231 aa).

The protein belongs to the ATP phosphoribosyltransferase family. Short subfamily. As to quaternary structure, heteromultimer composed of HisG and HisZ subunits.

The protein localises to the cytoplasm. The enzyme catalyses 1-(5-phospho-beta-D-ribosyl)-ATP + diphosphate = 5-phospho-alpha-D-ribose 1-diphosphate + ATP. The protein operates within amino-acid biosynthesis; L-histidine biosynthesis; L-histidine from 5-phospho-alpha-D-ribose 1-diphosphate: step 1/9. Its function is as follows. Catalyzes the condensation of ATP and 5-phosphoribose 1-diphosphate to form N'-(5'-phosphoribosyl)-ATP (PR-ATP). Has a crucial role in the pathway because the rate of histidine biosynthesis seems to be controlled primarily by regulation of HisG enzymatic activity. The protein is ATP phosphoribosyltransferase of Brucella suis (strain ATCC 23445 / NCTC 10510).